A 56-amino-acid polypeptide reads, in one-letter code: Large ribosomal subunit protein bL33C (56 aa).

Belongs to the bacterial ribosomal protein bL33 family.

The polypeptide is Large ribosomal subunit protein bL33C (Sorangium cellulosum (strain So ce56) (Polyangium cellulosum (strain So ce56))).